The primary structure comprises 153 residues: MIADSSSWLKLTKKVRFGDTDAAGVMHFHQLLRWCHEAWEESLERYGLEAQAVFPGCRGQEQWPAIALPVVHCRADFLRPVHGGDQLSLHLTPQRLDPSSFEVHHRFLLEQQDVAHGWIRHVAISTETRRRSALPDAIERWLEASLIGRISEL.

Residue Asp21 is part of the active site.

This sequence belongs to the 4-hydroxybenzoyl-CoA thioesterase family. DHNA-CoA hydrolase subfamily.

The enzyme catalyses 1,4-dihydroxy-2-naphthoyl-CoA + H2O = 1,4-dihydroxy-2-naphthoate + CoA + H(+). Its pathway is cofactor biosynthesis; phylloquinone biosynthesis. It functions in the pathway quinol/quinone metabolism; 1,4-dihydroxy-2-naphthoate biosynthesis; 1,4-dihydroxy-2-naphthoate from chorismate: step 7/7. In terms of biological role, catalyzes the hydrolysis of 1,4-dihydroxy-2-naphthoyl-CoA (DHNA-CoA) to 1,4-dihydroxy-2-naphthoate (DHNA), a reaction involved in phylloquinone (vitamin K1) biosynthesis. The protein is 1,4-dihydroxy-2-naphthoyl-CoA hydrolase of Synechococcus sp. (strain WH7803).